Here is a 358-residue protein sequence, read N- to C-terminus: Membrane-bound lytic murein transglycosylase C (358 aa).

An N-terminal signal peptide occupies residues 1-19 (MKITLKKLLILAIVPFLYA). Cys20 is lipidated: N-palmitoyl cysteine. Cys20 carries the S-diacylglycerol cysteine lipid modification.

This sequence belongs to the transglycosylase Slt family.

The protein resides in the cell outer membrane. The catalysed reaction is Exolytic cleavage of the (1-&gt;4)-beta-glycosidic linkage between N-acetylmuramic acid (MurNAc) and N-acetylglucosamine (GlcNAc) residues in peptidoglycan, from either the reducing or the non-reducing ends of the peptidoglycan chains, with concomitant formation of a 1,6-anhydrobond in the MurNAc residue.. Functionally, murein-degrading enzyme. May play a role in recycling of muropeptides during cell elongation and/or cell division. This chain is Membrane-bound lytic murein transglycosylase C, found in Actinobacillus succinogenes (strain ATCC 55618 / DSM 22257 / CCUG 43843 / 130Z).